Consider the following 150-residue polypeptide: Endoribonuclease YbeY (150 aa).

Zn(2+) contacts are provided by His-113, His-117, and His-123.

It belongs to the endoribonuclease YbeY family. It depends on Zn(2+) as a cofactor.

The protein localises to the cytoplasm. In terms of biological role, single strand-specific metallo-endoribonuclease involved in late-stage 70S ribosome quality control and in maturation of the 3' terminus of the 16S rRNA. The protein is Endoribonuclease YbeY of Malacoplasma penetrans (strain HF-2) (Mycoplasma penetrans).